The chain runs to 211 residues: Protein-L-isoaspartate O-methyltransferase (211 aa).

The active site involves Ser62.

It belongs to the methyltransferase superfamily. L-isoaspartyl/D-aspartyl protein methyltransferase family.

The protein resides in the cytoplasm. It catalyses the reaction [protein]-L-isoaspartate + S-adenosyl-L-methionine = [protein]-L-isoaspartate alpha-methyl ester + S-adenosyl-L-homocysteine. Catalyzes the methyl esterification of L-isoaspartyl residues in peptides and proteins that result from spontaneous decomposition of normal L-aspartyl and L-asparaginyl residues. It plays a role in the repair and/or degradation of damaged proteins. The polypeptide is Protein-L-isoaspartate O-methyltransferase (Shewanella baltica (strain OS223)).